The following is a 123-amino-acid chain: Large ribosomal subunit protein bL12 (123 aa).

It belongs to the bacterial ribosomal protein bL12 family. As to quaternary structure, homodimer. Part of the ribosomal stalk of the 50S ribosomal subunit. Forms a multimeric L10(L12)X complex, where L10 forms an elongated spine to which 2 to 4 L12 dimers bind in a sequential fashion. Binds GTP-bound translation factors.

Forms part of the ribosomal stalk which helps the ribosome interact with GTP-bound translation factors. Is thus essential for accurate translation. The polypeptide is Large ribosomal subunit protein bL12 (Bacillus licheniformis (strain ATCC 14580 / DSM 13 / JCM 2505 / CCUG 7422 / NBRC 12200 / NCIMB 9375 / NCTC 10341 / NRRL NRS-1264 / Gibson 46)).